We begin with the raw amino-acid sequence, 78 residues long: Acyl carrier protein (78 aa).

One can recognise a Carrier domain in the interval 2 to 77 (SNLEERVKKI…AAIDYVTANA (76 aa)). Residue S37 is modified to O-(pantetheine 4'-phosphoryl)serine.

The protein belongs to the acyl carrier protein (ACP) family. In terms of processing, 4'-phosphopantetheine is transferred from CoA to a specific serine of apo-ACP by AcpS. This modification is essential for activity because fatty acids are bound in thioester linkage to the sulfhydryl of the prosthetic group.

The protein localises to the cytoplasm. It participates in lipid metabolism; fatty acid biosynthesis. Its function is as follows. Carrier of the growing fatty acid chain in fatty acid biosynthesis. The chain is Acyl carrier protein from Vibrio vulnificus (strain CMCP6).